A 446-amino-acid polypeptide reads, in one-letter code: Immunoglobulin heavy constant gamma 3 (446 aa).

Residues A1 to V98 are CH1. Over A1–T397 the chain is Extracellular. In terms of domain architecture, Ig-like 1 spans P6–E99. An intrachain disulfide couples C27 to C83. Residues E99–P160 form a hinge region. 3 repeats span residues E116 to P130, E131 to P145, and E146 to P160. O-linked (GalNAc...) threonine glycosylation is found at T122, T137, and T152. The CH2 stretch occupies residues A161–K270. Ig-like domains are found at residues P168–S267 and P276–S372. Intrachain disulfides connect C191/C251 and C297/C355. 2 N-linked (GlcNAc...) asparagine glycosylation sites follow: N227 and N322. The segment at G271–E376 is CH3. The chain crosses the membrane as a helical span at residues I398–F418. The Cytoplasmic segment spans residues K419 to A446.

As to quaternary structure, immunoglobulins are composed of two identical heavy chains and two identical light chains; disulfide-linked. Post-translationally, N-linked glycans at Asn-322 are noncore fucosylated and the vast majority are diantennary species with a bisecting GlcNAc. Among them the most dominant glycans are HexNAc5Hex4, HexNAc5Hex5, and HexNAc5Hex5Sia1. N-linked glycans at Asn-227 are diantennary core fucosylated structures without bisecting GlcNAc (HexNAc4Hex4Fuc1, HexNAc4Hex5Fuc1, and HexNAc4Hex5Fuc1Sia1). Glycosylation on Asn-227 is required for interaction with Fc receptors and ability to activate the complement pathway. In terms of processing, (Microbial infection) Deglycosylation on Asn-227 by S.pyogenes EndoS or Endos2 endoglucosidases prevents interaction between immunoglobulin-gamma (IgG) and Fc receptors, impairing ability to activate the complement pathway. Post-translationally, O-linked glycans are non-, mono- and disialylated core 1-type O-glycans.

The protein resides in the secreted. It is found in the cell membrane. Its function is as follows. Constant region of immunoglobulin heavy chains. Immunoglobulins, also known as antibodies, are membrane-bound or secreted glycoproteins produced by B lymphocytes. In the recognition phase of humoral immunity, the membrane-bound immunoglobulins serve as receptors which, upon binding of a specific antigen, trigger the clonal expansion and differentiation of B lymphocytes into immunoglobulins-secreting plasma cells. Secreted immunoglobulins mediate the effector phase of humoral immunity, which results in the elimination of bound antigens. The antigen binding site is formed by the variable domain of one heavy chain, together with that of its associated light chain. Thus, each immunoglobulin has two antigen binding sites with remarkable affinity for a particular antigen. The variable domains are assembled by a process called V-(D)-J rearrangement and can then be subjected to somatic hypermutations which, after exposure to antigen and selection, allow affinity maturation for a particular antigen. The chain is Immunoglobulin heavy constant gamma 3 from Homo sapiens (Human).